Reading from the N-terminus, the 298-residue chain is Multifunctional dioxygenase ausE (298 aa).

Substrate is bound by residues R72 and Q127. Fe cation contacts are provided by H130 and D132. A substrate-binding site is contributed by T167. H214 provides a ligand contact to Fe cation. R226 provides a ligand contact to substrate.

This sequence belongs to the PhyH family. As to quaternary structure, homodimer. The cofactor is Fe cation.

The catalysed reaction is preaustinoid A1 + 2-oxoglutarate + O2 = preaustinoid A2 + succinate + CO2 + H2O. It catalyses the reaction preaustinoid A2 + 2-oxoglutarate + O2 = preaustinoid A3 + succinate + CO2 + H2O. The enzyme catalyses berkeleyone A + 2-oxoglutarate + O2 = preaustinoid A + succinate + CO2 + H2O. It participates in secondary metabolite biosynthesis; terpenoid biosynthesis. In terms of biological role, multifunctional dioxygenase; part of the gene cluster that mediates the biosynthesis of calidodehydroaustin, a fungal meroterpenoid. The first step of the pathway is the synthesis of 3,5-dimethylorsellinic acid by the polyketide synthase ausA. 3,5-dimethylorsellinic acid is then prenylated by the polyprenyl transferase ausN. Further epoxidation by the FAD-dependent monooxygenase ausM and cyclization by the probable terpene cyclase ausL lead to the formation of protoaustinoid A. Protoaustinoid A is then oxidized to spiro-lactone preaustinoid A3 by the combined action of the FAD-binding monooxygenases ausB and ausC, and the dioxygenase ausE. Acid-catalyzed keto-rearrangement and ring contraction of the tetraketide portion of preaustinoid A3 by ausJ lead to the formation of preaustinoid A4. The aldo-keto reductase ausK, with the help of ausH, is involved in the next step by transforming preaustinoid A4 into isoaustinone which is in turn hydroxylated by the P450 monooxygenase ausI to form austinolide. The cytochrome P450 monooxygenase ausG modifies austinolide to austinol. Austinol is further acetylated to austin by the O-acetyltransferase ausP, which spontaneously changes to dehydroaustin. The cytochrome P450 monooxygenase ausR then converts dehydroaustin is into 7-dehydrodehydroaustin. The hydroxylation catalyzed by ausR permits the O-acetyltransferase ausQ to add an additional acetyl group to the molecule, leading to the formation of acetoxydehydroaustin. The short chain dehydrogenase ausT catalyzes the reduction of the double bond present between carbon atoms 1 and 2 to convert 7-dehydrodehydroaustin into 1,2-dihydro-7-hydroxydehydroaustin. AusQ catalyzes not only an acetylation reaction but also the addition of the PKS ausV diketide product to 1,2-dihydro-7-hydroxydehydroaustin, forming precalidodehydroaustin. Finally, the iron/alpha-ketoglutarate-dependent dioxygenase converts precalidodehydroaustin into calidodehydroaustin. In Aspergillus calidoustus, this protein is Multifunctional dioxygenase ausE.